A 273-amino-acid polypeptide reads, in one-letter code: Glutamate transport system permease protein GluD (273 aa).

A run of 5 helical transmembrane segments spans residues 26 to 46 (ILPGLWGTLKSAVFSVILALV), 64 to 84 (WFCAVIIETFRAIPVLILMIF), 100 to 120 (LAFAAVVFGLTMYNGSVIAEI), 150 to 170 (ILLPQAVAAMLPALISQMVIA), and 200 to 220 (LAALFVVALIMIVLNFSLTAL). The ABC transmembrane type-1 domain maps to 30-221 (LWGTLKSAVF…VLNFSLTALA (192 aa)). The disordered stretch occupies residues 242–273 (PEQPDQGLETKDNVNVDWQDPDYKDLKTPGVQ). Basic and acidic residues predominate over residues 262 to 273 (PDYKDLKTPGVQ).

This sequence belongs to the binding-protein-dependent transport system permease family. HisMQ subfamily. The complex is composed of two ATP-binding proteins (GluA), two transmembrane proteins (GluC and GluD) and a solute-binding protein (GluB).

The protein localises to the cell membrane. In terms of biological role, part of the ABC transporter complex GluABCD involved in glutamate uptake. Probably responsible for the translocation of the substrate across the membrane. This chain is Glutamate transport system permease protein GluD, found in Corynebacterium glutamicum (strain ATCC 13032 / DSM 20300 / JCM 1318 / BCRC 11384 / CCUG 27702 / LMG 3730 / NBRC 12168 / NCIMB 10025 / NRRL B-2784 / 534).